The sequence spans 255 residues: Putative OPA3-like protein CG13603 (255 aa).

The stretch at Lys-108–Arg-154 forms a coiled coil. The disordered stretch occupies residues Val-168 to Phe-187. Positions Asp-212–Thr-241 form a coiled coil.

It belongs to the OPA3 family.

The polypeptide is Putative OPA3-like protein CG13603 (Drosophila melanogaster (Fruit fly)).